The sequence spans 185 residues: Probable gluconokinase (185 aa).

11-18 (GVSGSGKS) lines the ATP pocket.

It belongs to the gluconokinase GntK/GntV family.

It carries out the reaction D-gluconate + ATP = 6-phospho-D-gluconate + ADP + H(+). The protein operates within carbohydrate acid metabolism; D-gluconate degradation. This chain is Probable gluconokinase (Idnk), found in Rattus norvegicus (Rat).